An 862-amino-acid polypeptide reads, in one-letter code: MSSQLLICSVFVLFTFGPNSFPSCLAQEQAGNSDATQLSADAKAPESAKDKSGDVQNDGTKSVRSKRDLEIDFGSGDVQKRAREFVGKRAAPPVFQTPLVQDKISGFIPSETESPVIGEFAFPGSVFMDDEEALGAEEEPMDDEDLEFYKRPRQFVGKRGIDDYLLQEKLKDFIEKRPRQFVGKRPRQFVGKRPRQFVGKRPRQFVGKRPRQFVGKRPRQFVGKRPRQFVGKRPRQFVGKRPRQFVGKREADPSFLFEDKRVRDFVGKRSLDFLGGANWYNPYDVTMEPQSEGSDLQGFSKRPRQFVGKRDAFDMFEFSKRPRQFVGKRDQDEMFDFSKRPRQFVGKRDLQEFFDLSKRPRQFVGKREFDDEIDFSKRPRQFVGKRENDDDFDLSKRPRQFVGKRENDDEFDLSKRPRQFVGKRENDDELEFSKRPRQFVGKREDDEIDFSKRPRQFVGKRENDGEIDFSKRPRQFVGKRENDDEIDFSKRPRQFVGKREDGEIDFSKRPRQFVGKRENNDDLDFSKRPRQFVGKREVDDEIDFSKRPRQFVGKRENDDDLDFSKRPRQFVGKRENDDDLEFSKRPRQFVGKRENDPLLDFSKRPRQFVGKRENDDDLDFSKRPRQFVGKRENDPLIDFSKRPRQFVGKRESDGDFELSKRPRQFVGKRDVDGPGLSKRPRQFVGKREDYDIDFAKRPRQFVGKRGNEDEFEMSKRPRQFVGKRNFEELDQDFLRHMHDILDKRIPQFVSLPSLTAAKRVREFVGKRSDAAFLETLRHLRDYVGGQDEQNVSEFSYQHPYPSDLNDVGLIQQKRIREFVGKRGGDVDDINTTYRLGDFVSQPMSFVEEPSWLCRQLNAFGIS.

An N-terminal signal peptide occupies residues 1 to 20 (MSSQLLICSVFVLFTFGPNS). Positions 21 to 79 (FPSCLAQEQAGNSDATQLSADAKAPESAKDKSGDVQNDGTKSVRSKRDLEIDFGSGDVQ) are excised as a propeptide. The tract at residues 32 to 68 (NSDATQLSADAKAPESAKDKSGDVQNDGTKSVRSKRD) is disordered. Positions 43–53 (KAPESAKDKSG) are enriched in basic and acidic residues. A Valine amide modification is found at Val86. Residues 90–149 (AAPPVFQTPLVQDKISGFIPSETESPVIGEFAFPGSVFMDDEEALGAEEEPMDDEDLEFY) constitute a propeptide that is removed on maturation. A Valine amide modification is found at Val156. Residues 160 to 175 (GIDDYLLQEKLKDFIE) constitute a propeptide that is removed on maturation. Valine amide is present on residues Val182, Val190, Val198, Val206, Val214, Val222, Val230, Val238, and Val246. A propeptide spanning residues 250–259 (EADPSFLFED) is cleaved from the precursor. Position 266 is a valine amide (Val266). The propeptide occupies 270 to 300 (SLDFLGGANWYNPYDVTMEPQSEGSDLQGFS). The residue at position 307 (Val307) is a Valine amide. The propeptide occupies 311–319 (DAFDMFEFS). Val326 carries the valine amide modification. The propeptide occupies 330–338 (DQDEMFDFS). Position 345 is a valine amide (Val345). The propeptide occupies 349 to 357 (DLQEFFDLS). At Val364 the chain carries Valine amide. Positions 368–376 (EFDDEIDFS) are excised as a propeptide. Val383 is modified (valine amide). Positions 387-395 (ENDDDFDLS) are excised as a propeptide. Val402 carries the valine amide modification. A propeptide spanning residues 406-414 (ENDDEFDLS) is cleaved from the precursor. Residue Val421 is modified to Valine amide. A compositionally biased stretch (basic and acidic residues) spans 424-434 (RENDDELEFSK). The disordered stretch occupies residues 424–528 (RENDDELEFS…NNDDLDFSKR (105 aa)). Positions 425-433 (ENDDELEFS) are excised as a propeptide. Valine amide is present on Val440. Residues 441–452 (GKREDDEIDFSK) are compositionally biased toward basic and acidic residues. Residues 444–451 (EDDEIDFS) constitute a propeptide that is removed on maturation. Val458 carries the valine amide modification. Over residues 459 to 471 (GKRENDGEIDFSK) the composition is skewed to basic and acidic residues. The propeptide occupies 462-470 (ENDGEIDFS). Val477 carries the post-translational modification Valine amide. Residues 478 to 490 (GKRENDDEIDFSK) show a composition bias toward basic and acidic residues. A propeptide spanning residues 481-489 (ENDDEIDFS) is cleaved from the precursor. Residue Val496 is modified to Valine amide. A compositionally biased stretch (basic and acidic residues) spans 497 to 508 (GKREDGEIDFSK). A propeptide spanning residues 500-507 (EDGEIDFS) is cleaved from the precursor. Val514 is modified (valine amide). The segment covering 515 to 527 (GKRENNDDLDFSK) has biased composition (basic and acidic residues). Residues 518 to 526 (ENNDDLDFS) constitute a propeptide that is removed on maturation. The residue at position 533 (Val533) is a Valine amide. A propeptide spanning residues 537–545 (EVDDEIDFS) is cleaved from the precursor. Positions 549–634 (RQFVGKREND…RQFVGKREND (86 aa)) are disordered. Position 552 is a valine amide (Val552). The span at 553-565 (GKRENDDDLDFSK) shows a compositional bias: basic and acidic residues. A propeptide spanning residues 556-564 (ENDDDLDFS) is cleaved from the precursor. The residue at position 571 (Val571) is a Valine amide. Basic and acidic residues predominate over residues 572–584 (GKRENDDDLEFSK). Positions 575 to 583 (ENDDDLEFS) are excised as a propeptide. A Valine amide modification is found at Val590. The propeptide occupies 594–602 (ENDPLLDFS). At Val609 the chain carries Valine amide. The segment covering 610-622 (GKRENDDDLDFSK) has biased composition (basic and acidic residues). A propeptide spanning residues 613–621 (ENDDDLDFS) is cleaved from the precursor. Residue Val628 is modified to Valine amide. The propeptide occupies 632 to 640 (ENDPLIDFS). Residue Val647 is modified to Valine amide. A propeptide spanning residues 651–659 (ESDGDFELS) is cleaved from the precursor. Val666 is subject to Valine amide. Residues 670–677 (DVDGPGLS) constitute a propeptide that is removed on maturation. Val684 is modified (valine amide). The propeptide occupies 688 to 695 (EDYDIDFA). The residue at position 702 (Val702) is a Valine amide. Residues 706 to 714 (GNEDEFEMS) constitute a propeptide that is removed on maturation. Position 721 is a valine amide (Val721). Residues 724–757 (RNFEELDQDFLRHMHDILDKRIPQFVSLPSLTAA) constitute a propeptide that is removed on maturation. Valine amide is present on Val764. The propeptide occupies 768-812 (SDAAFLETLRHLRDYVGGQDEQNVSEFSYQHPYPSDLNDVGLIQQ). Val819 carries the post-translational modification Valine amide. Positions 823–862 (GGDVDDINTTYRLGDFVSQPMSFVEEPSWLCRQLNAFGIS) are excised as a propeptide.

In terms of tissue distribution, expressed abundantly in the abdominal ganglion, much less in the pedal and cerebral ganglia, and rarely in the buccal and pleural ganglia.

The protein localises to the secreted. In terms of biological role, PRQFV-amide may act as a modulator within the feeding system as well as in other systems of Aplysia. In Aplysia californica (California sea hare), this protein is Protein PRQFV-amide.